The primary structure comprises 93 residues: Large ribosomal subunit protein eL37A (93 aa).

Positions 19, 22, 34, and 37 each coordinate Zn(2+). Residues 19–37 (CRRCGRSSYHIQKSTCAQC) form a C4-type zinc finger.

Belongs to the eukaryotic ribosomal protein eL37 family. Requires Zn(2+) as cofactor.

Its function is as follows. Binds to the 23S rRNA. The chain is Large ribosomal subunit protein eL37A from Drosophila melanogaster (Fruit fly).